Consider the following 120-residue polypeptide: NAD(P)H-quinone oxidoreductase subunit 3, chloroplastic (120 aa).

Helical transmembrane passes span 9–29 (IFWTFLIIASLIPILVFWISG), 64–84 (MFALVFVVFDVETVFLYPWAM), and 88–108 (VLGVSVFIEAFIFVLILVVGL).

This sequence belongs to the complex I subunit 3 family. As to quaternary structure, NDH is composed of at least 16 different subunits, 5 of which are encoded in the nucleus.

The protein localises to the plastid. Its subcellular location is the chloroplast thylakoid membrane. It carries out the reaction a plastoquinone + NADH + (n+1) H(+)(in) = a plastoquinol + NAD(+) + n H(+)(out). The catalysed reaction is a plastoquinone + NADPH + (n+1) H(+)(in) = a plastoquinol + NADP(+) + n H(+)(out). Functionally, NDH shuttles electrons from NAD(P)H:plastoquinone, via FMN and iron-sulfur (Fe-S) centers, to quinones in the photosynthetic chain and possibly in a chloroplast respiratory chain. The immediate electron acceptor for the enzyme in this species is believed to be plastoquinone. Couples the redox reaction to proton translocation, and thus conserves the redox energy in a proton gradient. The sequence is that of NAD(P)H-quinone oxidoreductase subunit 3, chloroplastic from Zea mays (Maize).